A 119-amino-acid chain; its full sequence is Large ribosomal subunit protein uL22 (119 aa).

Belongs to the universal ribosomal protein uL22 family. In terms of assembly, part of the 50S ribosomal subunit.

This protein binds specifically to 23S rRNA; its binding is stimulated by other ribosomal proteins, e.g. L4, L17, and L20. It is important during the early stages of 50S assembly. It makes multiple contacts with different domains of the 23S rRNA in the assembled 50S subunit and ribosome. Its function is as follows. The globular domain of the protein is located near the polypeptide exit tunnel on the outside of the subunit, while an extended beta-hairpin is found that lines the wall of the exit tunnel in the center of the 70S ribosome. This chain is Large ribosomal subunit protein uL22, found in Tropheryma whipplei (strain TW08/27) (Whipple's bacillus).